We begin with the raw amino-acid sequence, 1040 residues long: MGTHARKKASLLLLVLATVALVSSPGWSFAQGTPATFGPIFEEQPIGLLFPEESAEDQVTLACRARASPPATYRWKMNGTDMNLEPGSRHQLMGGNLVIMSPTKTQDAGVYQCLASNPVGTVVSKEAVLRFGFLQEFSKEERDPVKTHEGWGVMLPCNPPAHYPGLSYRWLLNEFPNFIPTDGRHFVSQTTGNLYIARTNASDLGNYSCLATSHMDFSTKSVFSKFAQLNLAAEDPRLFAPSIKARFPPETYALVGQQVTLECFAFGNPVPRIKWRKVDGSLSPQWATAEPTLQIPSVSFEDEGTYECEAENSKGRDTVQGRIIVQAQPEWLKVISDTEADIGSNLRWGCAAAGKPRPMVRWLRNGEPLASQNRVEVLAGDLRFSKLSLEDSGMYQCVAENKHGTIYASAELAVQALAPDFRQNPVRRLIPAARGGEISILCQPRAAPKATILWSKGTEILGNSTRVTVTSDGTLIIRNISRSDEGKYTCFAENFMGKANSTGILSVRDATKITLAPSSADINVGDNLTLQCHASHDPTMDLTFTWTLDDFPIDFDKPGGHYRRASAKETIGDLTILNAHVRHGGKYTCMAQTVVDGTSKEATVLVRGPPGPPGGVVVRDIGDTTVQLSWSRGFDNHSPIAKYTLQARTPPSGKWKQVRTNPVNIEGNAETAQVLGLMPWMDYEFRVSASNILGTGEPSGPSSKIRTKEAVPSVAPSGLSGGGGAPGELIINWTPVSREYQNGDGFGYLLSFRRQGSSSWQTARVPGADAQYFVYGNDSIQPYTPFEVKIRSYNRRGDGPESLTALVYSAEEEPRVAPAKVWAKGSSSSEMNVSWEPVLQDMNGILLGYEIRYWKAGDNEAAADRVRTAGLDTSARVTGLNPNTKYHVTVRAYNRAGTGPASPSADAMTVKPPPRRPPGNISWTFSSSSLSLKWDPVVPLRNESTVTGYKMLYQNDLHPTPTLHLTSKNWIEIPVPEDIGHALVQIRTTGPGGDGIPAEVHIVRNGGTSMMVESAAARPAHPGPAFSCMVILMLAGYQKL.

Positions 1-30 (MGTHARKKASLLLLVLATVALVSSPGWSFA) are cleaved as a signal peptide. Ig-like C2-type domains lie at 39–130 (PIFE…AVLR), 135–224 (QEFS…SVFS), 241–324 (PSIK…GRII), 329–413 (PEWL…AELA), 419–506 (PDFR…GILS), and 511–605 (TKIT…ATVL). Disulfide bonds link C63/C113, C157/C209, C263/C308, and C350/C397. N78, N200, and N206 each carry an N-linked (GlcNAc...) asparagine glycan. Residues N463, N479, N500, and N527 are each glycosylated (N-linked (GlcNAc...) asparagine). Fibronectin type-III domains lie at 612 to 710 (PPGG…TKEA), 715 to 812 (APSG…SAEE), 817 to 913 (APAK…VKPP), and 917 to 1008 (PPGN…NGGT). N777 carries N-linked (GlcNAc...) asparagine glycosylation. A Cell attachment site motif is present at residues 796–798 (RGD). N-linked (GlcNAc...) asparagine glycans are attached at residues N832, N920, and N942. Residues 895 to 921 (RAGTGPASPSADAMTVKPPPRRPPGNI) form a disordered region. A1015 carries GPI-anchor amidated alanine lipidation. Positions 1016 to 1040 (AARPAHPGPAFSCMVILMLAGYQKL) are cleaved as a propeptide — removed in mature form.

Belongs to the immunoglobulin superfamily. Contactin family. As to expression, in neural tissues in embryos, and in adult brain, spinal cord and cerebellum.

The protein localises to the cell membrane. May play a role in the initial growth and guidance of axons. May be involved in cell adhesion. In conjunction with another transmembrane protein, CNTNAP2, contributes to the organization of axonal domains at nodes of Ranvier by maintaining voltage-gated potassium channels at the juxtaparanodal region. This is Contactin-2 (Cntn2) from Rattus norvegicus (Rat).